The following is a 254-amino-acid chain: Tryptophan synthase alpha chain (254 aa).

Active-site proton acceptor residues include Glu48 and Asp59.

It belongs to the TrpA family. As to quaternary structure, tetramer of two alpha and two beta chains.

It catalyses the reaction (1S,2R)-1-C-(indol-3-yl)glycerol 3-phosphate + L-serine = D-glyceraldehyde 3-phosphate + L-tryptophan + H2O. Its pathway is amino-acid biosynthesis; L-tryptophan biosynthesis; L-tryptophan from chorismate: step 5/5. Its function is as follows. The alpha subunit is responsible for the aldol cleavage of indoleglycerol phosphate to indole and glyceraldehyde 3-phosphate. The protein is Tryptophan synthase alpha chain of Desulfotalea psychrophila (strain LSv54 / DSM 12343).